A 189-amino-acid polypeptide reads, in one-letter code: Peptidyl-tRNA hydrolase (189 aa).

Tyrosine 15 provides a ligand contact to tRNA. Residue histidine 20 is the Proton acceptor of the active site. Residues phenylalanine 66, asparagine 68, and asparagine 114 each contribute to the tRNA site.

It belongs to the PTH family. Monomer.

It localises to the cytoplasm. The enzyme catalyses an N-acyl-L-alpha-aminoacyl-tRNA + H2O = an N-acyl-L-amino acid + a tRNA + H(+). Its function is as follows. Hydrolyzes ribosome-free peptidyl-tRNAs (with 1 or more amino acids incorporated), which drop off the ribosome during protein synthesis, or as a result of ribosome stalling. Catalyzes the release of premature peptidyl moieties from peptidyl-tRNA molecules trapped in stalled 50S ribosomal subunits, and thus maintains levels of free tRNAs and 50S ribosomes. The polypeptide is Peptidyl-tRNA hydrolase (Streptococcus pneumoniae serotype 2 (strain D39 / NCTC 7466)).